We begin with the raw amino-acid sequence, 222 residues long: Secreted protein D (222 aa).

The N-terminal stretch at 1 to 22 (MKIYYLFFVLIYLIYFINLVYC) is a signal peptide. Residue asparagine 25 is glycosylated (N-linked (GlcNAc...) asparagine).

Belongs to the Sct family.

The protein localises to the secreted. This Dictyostelium discoideum (Social amoeba) protein is Secreted protein D.